The sequence spans 100 residues: uncharacterized protein (100 aa).

The 93-residue stretch at 8–100 (MKQSDDQIRA…TYLPGFLETL (93 aa)) folds into the HTH arsR-type domain. Residues 44–67 (CGEVGEKCNIVKTTASYHFKTLRE) constitute a DNA-binding region (H-T-H motif).

This is an uncharacterized protein from Bacillus subtilis (strain 168).